The following is a 782-amino-acid chain: DnaJ homolog subfamily C member 16 (782 aa).

Positions 1-25 (MEVRKLSISWQFLIVLVLILQILSA) are cleaved as a signal peptide. At 26-535 (LDFDPYRVLG…DSIFHNNWRE (510 aa)) the chain is on the cytoplasmic side. Positions 29–93 (DPYRVLGVSR…EKRSNYDQYG (65 aa)) constitute a J domain. One can recognise a Thioredoxin domain in the interval 119-247 (FYFDESFFHF…LRQFVESLLP (129 aa)). A helical; Anchor for type IV membrane protein transmembrane segment spans residues 536-556 (MMPLLSLIFSALFILFGTVIV). Topologically, residues 557 to 782 (QAFSDSNDER…FYIPSWPELD (226 aa)) are extracellular. The interval 562–593 (SNDERESSPPEKEEAQEKTGKTEPSFTKENSS) is disordered. The segment covering 563–582 (NDERESSPPEKEEAQEKTGK) has biased composition (basic and acidic residues). Residues 583–593 (TEPSFTKENSS) are compositionally biased toward polar residues. Asn-631 carries an N-linked (GlcNAc...) asparagine glycan.

Its subcellular location is the endoplasmic reticulum membrane. In terms of biological role, plays an important role in regulating the size of autophagosomes during the formation process. In Homo sapiens (Human), this protein is DnaJ homolog subfamily C member 16 (DNAJC16).